Consider the following 604-residue polypeptide: Glutamyl-tRNA(Gln) amidotransferase subunit B, mitochondrial (604 aa).

A mitochondrion-targeting transit peptide spans 1 to 48 (MIRQCLSRRGAYSRYRLAARGVELAEPFHHQSSRPQGRRNWSSSPRCS). The tract at residues 28-57 (FHHQSSRPQGRRNWSSSPRCSLDIRTDTPR) is disordered. The segment covering 33–46 (SRPQGRRNWSSSPR) has biased composition (polar residues).

It belongs to the GatB/GatE family. GatB subfamily. As to quaternary structure, subunit of the heterotrimeric GatCAB amidotransferase (AdT) complex, composed of A, B and C subunits.

The protein localises to the mitochondrion. It catalyses the reaction L-glutamyl-tRNA(Gln) + L-glutamine + ATP + H2O = L-glutaminyl-tRNA(Gln) + L-glutamate + ADP + phosphate + H(+). Allows the formation of correctly charged Gln-tRNA(Gln) through the transamidation of misacylated Glu-tRNA(Gln) in the mitochondria. The reaction takes place in the presence of glutamine and ATP through an activated gamma-phospho-Glu-tRNA(Gln). The sequence is that of Glutamyl-tRNA(Gln) amidotransferase subunit B, mitochondrial from Blastomyces gilchristii (strain SLH14081) (Blastomyces dermatitidis).